A 345-amino-acid polypeptide reads, in one-letter code: Probable galacturonosyltransferase-like 3 (345 aa).

Over 1–7 (MSSLRLR) the chain is Cytoplasmic. Residues 8–28 (LCLLLLLPITISCVTVTLTDL) form a helical; Signal-anchor for type II membrane protein membrane-spanning segment. Topologically, residues 29-345 (PAFREAPAFR…FRYSPLISDS (317 aa)) are lumenal. N197 carries N-linked (GlcNAc...) asparagine glycosylation.

Belongs to the glycosyltransferase 8 family.

The protein resides in the golgi apparatus membrane. Its pathway is glycan metabolism; pectin biosynthesis. Functionally, may be involved in pectin and/or xylans biosynthesis in cell walls. The sequence is that of Probable galacturonosyltransferase-like 3 (GATL3) from Arabidopsis thaliana (Mouse-ear cress).